A 315-amino-acid polypeptide reads, in one-letter code: Gamma-hemolysin component C (315 aa).

The signal sequence occupies residues 1 to 29 (MLKNKILTTTLSVSLLAPLANPLLENAKA).

It belongs to the aerolysin family. In terms of assembly, toxicity requires sequential binding and synergistic association of a class S and a class F component which form heterooligomeric complexes. HlgC (class S) associates with HlgB (class F) thus forming an CB toxin.

Its function is as follows. Toxin that seems to act by forming pores in the membrane of the cell. Has a hemolytic and a leucotoxic activity. This Staphylococcus aureus (strain COL) protein is Gamma-hemolysin component C (hlgC).